The following is a 114-amino-acid chain: Fructose-bisphosphate aldolase 2 (114 aa).

Residue 35–38 participates in dihydroxyacetone phosphate binding; sequence NIDT.

It belongs to the class II fructose-bisphosphate aldolase family. Homodimer. Requires Zn(2+) as cofactor.

The catalysed reaction is beta-D-fructose 1,6-bisphosphate = D-glyceraldehyde 3-phosphate + dihydroxyacetone phosphate. Its pathway is carbohydrate biosynthesis; Calvin cycle. It participates in carbohydrate degradation; glycolysis; D-glyceraldehyde 3-phosphate and glycerone phosphate from D-glucose: step 4/4. Its function is as follows. Catalyzes the aldol condensation of dihydroxyacetone phosphate (DHAP or glycerone-phosphate) with glyceraldehyde 3-phosphate (G3P) to form fructose 1,6-bisphosphate (FBP) in gluconeogenesis and the reverse reaction in glycolysis. In Rhodobacter capsulatus (Rhodopseudomonas capsulata), this protein is Fructose-bisphosphate aldolase 2 (cbbA).